The following is a 63-amino-acid chain: Large ribosomal subunit protein bL28 (63 aa).

Belongs to the bacterial ribosomal protein bL28 family.

This chain is Large ribosomal subunit protein bL28, found in Desulforudis audaxviator (strain MP104C).